A 793-amino-acid chain; its full sequence is Protocadherin beta-7 (793 aa).

The signal sequence occupies residues 1 to 26; it reads MEARVERAVQKRQVLFLCVFLGMSWA. The Extracellular segment spans residues 27–688; the sequence is GAEPLRYFVA…DQANSLTVYL (662 aa). Cadherin domains lie at 35–133, 138–242, 247–347, 352–451, and 456–561; these read VAEE…APVF, ISLK…APDF, YKVQ…RPEL, LTSP…APAF, and YTLF…SPFV. N-linked (GlcNAc...) asparagine glycosylation is present at asparagine 169. Residues asparagine 418 and asparagine 436 are each glycosylated (N-linked (GlcNAc...) asparagine). Residue asparagine 567 is glycosylated (N-linked (GlcNAc...) asparagine). Residues 568–671 enclose the Cadherin 6 domain; that stretch reads SSAPCTEPLP…LVDGFSQPYL (104 aa). The chain crosses the membrane as a helical span at residues 689 to 709; that stretch reads VVALASVSSLFLLSVLLFVAV. At 710-793 the chain is on the cytoplasmic side; sequence RLCRRSRAAP…NRPFQNNLGF (84 aa).

Its subcellular location is the cell membrane. Functionally, potential calcium-dependent cell-adhesion protein. May be involved in the establishment and maintenance of specific neuronal connections in the brain. The chain is Protocadherin beta-7 (PCDHB7) from Homo sapiens (Human).